Reading from the N-terminus, the 354-residue chain is Sulfate/thiosulfate import ATP-binding protein CysA (354 aa).

Residues 3 to 237 (IEVRGLSKRF…PATPFVYGFL (235 aa)) enclose the ABC transporter domain. An ATP-binding site is contributed by 35 to 42 (GPSGCGKT).

Belongs to the ABC transporter superfamily. Sulfate/tungstate importer (TC 3.A.1.6) family. In terms of assembly, the complex is composed of two ATP-binding proteins (CysA), two transmembrane proteins (CysT and CysW) and a solute-binding protein (CysP).

Its subcellular location is the cell inner membrane. It carries out the reaction sulfate(out) + ATP + H2O = sulfate(in) + ADP + phosphate + H(+). The enzyme catalyses thiosulfate(out) + ATP + H2O = thiosulfate(in) + ADP + phosphate + H(+). Its function is as follows. Part of the ABC transporter complex CysAWTP involved in sulfate/thiosulfate import. Responsible for energy coupling to the transport system. In Bordetella pertussis (strain Tohama I / ATCC BAA-589 / NCTC 13251), this protein is Sulfate/thiosulfate import ATP-binding protein CysA.